The chain runs to 440 residues: Na(+)/H(+) antiporter NhaA (440 aa).

Helical transmembrane passes span 25-45 (FLHI…VALV), 76-96 (LHHV…GLEV), 112-132 (TLPI…YLSM), 141-161 (GWGI…AILG), 170-190 (VLLL…IAIG), 194-214 (SLDG…HFLS), 225-245 (VIVG…ATLI), 312-332 (HPWT…GVLI), 345-365 (VVIG…WLVI), 378-398 (WPIL…ALFI), and 414-434 (GVLV…LWTL).

The protein belongs to the NhaA Na(+)/H(+) (TC 2.A.33) antiporter family.

The protein resides in the cell inner membrane. It carries out the reaction Na(+)(in) + 2 H(+)(out) = Na(+)(out) + 2 H(+)(in). Functionally, na(+)/H(+) antiporter that extrudes sodium in exchange for external protons. The protein is Na(+)/H(+) antiporter NhaA of Rhodopirellula baltica (strain DSM 10527 / NCIMB 13988 / SH1).